Here is a 523-residue protein sequence, read N- to C-terminus: MKETDQMQSLEGSGAERSVGTQTGSMTGQIPRLSKVNLFTLLSLWMELFPGVEAQGQKSQKTEEESRGPLGDNEELTRVSTEKKQVKKTGLVVVKNMKIIGLHCSSEDLHTGQIALIKHGSRLKNCDLYFSRKPCSACLKMIVNAGVNRISYWPSDPEISLLTEASSSEDAKLDAKAAERLKSNSRAHVCVLLQPLVCYMVQFVEETSYKCDFIQKTAKALPGADTDFYSECKQERIKEYEMLFLVSNEERHKQILMTIGLESLCEDPYFSNLRQNMKDLILLLATVASSVPNLKHFGFYCSSPEQINEIHNQSLPQEVARHCMVQARLLAYRTEDHKTGVGAVIWAEAKSRSCDGTGAMYFIGCGYNAFPVGSEYADFPHMDDKHKDREIRKFRYIIHAEQNALTFRCQDIKPEERSMIFVTKCPCDECVPLIKGAGIKQIYAGDVDVGKKKADISYMKFGELEGVRKFTWQLNPSEAYSLDPNEPERRENGVLRRRSAKDEQRSSKRPRLETRSAGRATLQ.

The span at 1–11 shows a compositional bias: polar residues; it reads MKETDQMQSLE. Disordered stretches follow at residues 1-27 and 55-81; these read MKET…GSMT and QGQK…RVST. Residues 71–169 enclose the CMP/dCMP-type deaminase 1 domain; sequence GDNEELTRVS…SLLTEASSSE (99 aa). Zn(2+) is bound by residues H110, C135, and C138. Positions 272–284 match the Nuclear export signal motif; the sequence is NLRQNMKDLILLL. In terms of domain architecture, CMP/dCMP-type deaminase 2 spans 318 to 483; that stretch reads EVARHCMVQA…LNPSEAYSLD (166 aa). H399 contacts Zn(2+). Catalysis depends on E401, which acts as the Proton donor. Residues C427 and C430 each contribute to the Zn(2+) site. Residues 478–523 are disordered; sequence EAYSLDPNEPERRENGVLRRRSAKDEQRSSKRPRLETRSAGRATLQ. Residues 486-516 show a composition bias toward basic and acidic residues; the sequence is EPERRENGVLRRRSAKDEQRSSKRPRLETRS. The Bipartite nuclear localization signal signature appears at 489 to 511; the sequence is RRENGVLRRRSAKDEQRSSKRPR.

The protein belongs to the cytidine and deoxycytidylate deaminase family. The cofactor is Zn(2+).

It localises to the cytoplasm. Its subcellular location is the nucleus. It carries out the reaction 2'-deoxycytidine + H2O + H(+) = 2'-deoxyuridine + NH4(+). The enzyme catalyses cytidine + H2O + H(+) = uridine + NH4(+). Catalyzes the deamination of cytidine and deoxycytidine into uridine and deoxyuridine, respectively. May play an important role in testicular development and spermatogenesis. This Mus musculus (Mouse) protein is Cytidine and dCMP deaminase domain-containing protein 1 (Cdadc1).